A 196-amino-acid chain; its full sequence is Dephospho-CoA kinase (196 aa).

The DPCK domain maps to 6–196 (AIALTGGIGT…QVERFLKTLL (191 aa)). An ATP-binding site is contributed by 14–19 (GTGKST).

The protein belongs to the CoaE family.

It is found in the cytoplasm. It catalyses the reaction 3'-dephospho-CoA + ATP = ADP + CoA + H(+). It functions in the pathway cofactor biosynthesis; coenzyme A biosynthesis; CoA from (R)-pantothenate: step 5/5. Functionally, catalyzes the phosphorylation of the 3'-hydroxyl group of dephosphocoenzyme A to form coenzyme A. The polypeptide is Dephospho-CoA kinase (Helicobacter pylori (strain ATCC 700392 / 26695) (Campylobacter pylori)).